Consider the following 405-residue polypeptide: Plasma serine protease inhibitor (405 aa).

The N-terminal stretch at 1 to 19 (MRFFPILCLVLFISHGVAS) is a signal peptide. Residues 20-24 (RRHSH) constitute a propeptide, removed in mature form. An N-linked (GlcNAc...) asparagine glycan is attached at asparagine 247.

This sequence belongs to the serpin family. As to quaternary structure, forms protease inhibiting heterodimers in extracellular body fluids with serine proteases such as activated protein C/coagulation factor V/F5, acrosin/ACR, chymotrypsinogen B/CTRB1, prothrombin/F2, factor Xa/F10, factor XI/F11, kallikrein/KLKB1, tissue kallikrein, trypsin/PRSS1, prostate specific antigen/KLK3, tissue plasminogen activator/PLAT and urinary plasminogen activator/PLAU. Forms membrane-anchored serine proteases inhibiting heterodimers with TMPRSS7 and TMPRSS11E. Interacts with SEMG2. N-glycosylated; glycans consist of a mixture of sialylated bi- (including sialyl-Lewis X epitopes), tri- and tetra-antennary complex-type chains; affects the maximal heparin- and thrombomodulin-enhanced rates of thrombin inhibition. O-glycosylated; further modified with 2 sialic acid residues. Proteolytically cleaved at the N-terminus; inhibits slightly the heparin- and thrombomodulin-enhanced rates of thrombin inhibition. In terms of processing, proteolytically cleaved. Inhibition of proteases is accompanied by formation of a stable enzyme-inhibitor complex and by degradation of the serpin to lower molecular weight derivatives. As to expression, not detected in blood plasma (at protein level). Expressed in testis, epididymis, seminal vesicles, prostate and ovaries.

It localises to the secreted. The protein resides in the extracellular space. With respect to regulation, its inhibitory activity is greatly enhanced in the presence of glycosaminoglycans, heparin, thrombomodulin and phospholipids vesicles. In terms of biological role, heparin-dependent serine protease inhibitor acting in body fluids and secretions. Inactivates serine proteases by binding irreversibly to their serine activation site. Involved in the regulation of intravascular and extravascular proteolytic activities. Plays hemostatic roles in the blood plasma. Acts as a procoagulant and pro-inflammatory factor by inhibiting the anticoagulant activated protein C factor as well as the generation of activated protein C factor by the thrombin/thrombomodulin complex. Acts as an anticoagulant factor by inhibiting blood coagulation factors like prothrombin, factor XI, factor Xa, plasma kallikrein and fibrinolytic enzymes such as tissue- and urinary-type plasminogen activators. In seminal plasma, inactivates several serine proteases implicated in the reproductive system. Inhibits the serpin acrosin; indirectly protects component of the male genital tract from being degraded by excessive released acrosin. Inhibits tissue- and urinary-type plasminogen activator, prostate-specific antigen and kallikrein activities; has a control on the sperm motility and fertilization. Inhibits the activated protein C-catalyzed degradation of SEMG1 and SEMG2; regulates the degradation of semenogelin during the process of transfer of spermatozoa from the male reproductive tract into the female tract. In urine, inhibits urinary-type plasminogen activator and kallikrein activities. Inactivates membrane-anchored serine proteases activities such as MPRSS7 and TMPRSS11E. Inhibits urinary-type plasminogen activator-dependent tumor cell invasion and metastasis. May also play a non-inhibitory role in seminal plasma and urine as a hydrophobic hormone carrier by its binding to retinoic acid. This chain is Plasma serine protease inhibitor (Serpina5), found in Mus musculus (Mouse).